The chain runs to 559 residues: Formate--tetrahydrofolate ligase (559 aa).

Residue 68–75 (TPAGEGKS) participates in ATP binding.

The protein belongs to the formate--tetrahydrofolate ligase family.

The enzyme catalyses (6S)-5,6,7,8-tetrahydrofolate + formate + ATP = (6R)-10-formyltetrahydrofolate + ADP + phosphate. The protein operates within one-carbon metabolism; tetrahydrofolate interconversion. The sequence is that of Formate--tetrahydrofolate ligase from Lactobacillus gasseri (strain ATCC 33323 / DSM 20243 / BCRC 14619 / CIP 102991 / JCM 1131 / KCTC 3163 / NCIMB 11718 / NCTC 13722 / AM63).